We begin with the raw amino-acid sequence, 416 residues long: Phosphoglycerate kinase 2 (416 aa).

Substrate-binding positions include 28–30 (DMN), R44, 65–68 (HQSR), R122, and R162. Residues E337 and 362-365 (GGHI) contribute to the ATP site.

The protein belongs to the phosphoglycerate kinase family. As to quaternary structure, monomer.

The protein localises to the cytoplasm. It catalyses the reaction (2R)-3-phosphoglycerate + ATP = (2R)-3-phospho-glyceroyl phosphate + ADP. It functions in the pathway carbohydrate degradation; glycolysis; pyruvate from D-glyceraldehyde 3-phosphate: step 2/5. The sequence is that of Phosphoglycerate kinase 2 from Methanosarcina acetivorans (strain ATCC 35395 / DSM 2834 / JCM 12185 / C2A).